A 343-amino-acid polypeptide reads, in one-letter code: Cathepsin Q (343 aa).

The signal sequence occupies residues 1–20 (MTPAVFLVILCLGVVPGASA). The propeptide at 21 to 124 (LDLSLDVQWQ…FPNSWNWRDA (104 aa)) is activation peptide. 2 cysteine pairs are disulfide-bonded: cysteine 146–cysteine 189 and cysteine 180–cysteine 222. Cysteine 149 is a catalytic residue. An N-linked (GlcNAc...) asparagine glycan is attached at asparagine 228. Cysteine 280 and cysteine 332 form a disulfide bridge. Histidine 286 is a catalytic residue. Asparagine 298 carries an N-linked (GlcNAc...) asparagine glycan. The active site involves asparagine 310.

This sequence belongs to the peptidase C1 family. In terms of tissue distribution, highly expressed in placenta.

The protein localises to the lysosome. The protein is Cathepsin Q (Ctsq) of Rattus norvegicus (Rat).